A 744-amino-acid polypeptide reads, in one-letter code: NADH-ubiquinone oxidoreductase 78 kDa subunit, mitochondrial (744 aa).

Residues 1 to 10 (MLRSTLSRSA) show a composition bias toward polar residues. The segment at 1–26 (MLRSTLSRSAWRTGRHQAARNASRAF) is disordered. A mitochondrion-targeting transit peptide spans 1–33 (MLRSTLSRSAWRTGRHQAARNASRAFSATAQRP). Residues 34–112 (AEVELTIDGK…GMVVKTNSPL (79 aa)) form the 2Fe-2S ferredoxin-type domain. [2Fe-2S] cluster is bound by residues C68, C79, C82, and C96. The 4Fe-4S His(Cys)3-ligated-type domain maps to 112-151 (LTHKAREGVMEFLLANHPLDCPICDQGGECDLQDQSMRYG). Residues H128, C132, C135, C141, C182, C185, C188, and C232 each contribute to the [4Fe-4S] cluster site. In terms of domain architecture, 4Fe-4S Mo/W bis-MGD-type spans 251-307 (LKKTESIDVLDGLGSNIRVDTRGLEVMRILPRLNDEVNEEWINDKTRFACDGLKTQR).

Belongs to the complex I 75 kDa subunit family. In terms of assembly, complex I is composed of about 40 different subunits. [2Fe-2S] cluster is required as a cofactor. It depends on [4Fe-4S] cluster as a cofactor.

The protein localises to the mitochondrion inner membrane. It carries out the reaction a ubiquinone + NADH + 5 H(+)(in) = a ubiquinol + NAD(+) + 4 H(+)(out). Functionally, core subunit of the mitochondrial membrane respiratory chain NADH dehydrogenase (Complex I) that is believed to belong to the minimal assembly required for catalysis. Complex I functions in the transfer of electrons from NADH to the respiratory chain. The immediate electron acceptor for the enzyme is believed to be ubiquinone. This is the largest subunit of complex I and it is a component of the iron-sulfur (IP) fragment of the enzyme. It may form part of the active site crevice where NADH is oxidized. This Neurospora crassa (strain ATCC 24698 / 74-OR23-1A / CBS 708.71 / DSM 1257 / FGSC 987) protein is NADH-ubiquinone oxidoreductase 78 kDa subunit, mitochondrial (nuo78).